A 118-amino-acid polypeptide reads, in one-letter code: Small ribosomal subunit protein uS13 (118 aa).

Positions 91–118 are disordered; that stretch reads HRRGLPVRGQRTKTNARTRKGPRKPIKK.

Belongs to the universal ribosomal protein uS13 family. Part of the 30S ribosomal subunit. Forms a loose heterodimer with protein S19. Forms two bridges to the 50S subunit in the 70S ribosome.

Located at the top of the head of the 30S subunit, it contacts several helices of the 16S rRNA. In the 70S ribosome it contacts the 23S rRNA (bridge B1a) and protein L5 of the 50S subunit (bridge B1b), connecting the 2 subunits; these bridges are implicated in subunit movement. Contacts the tRNAs in the A and P-sites. This is Small ribosomal subunit protein uS13 from Sodalis glossinidius (strain morsitans).